Consider the following 679-residue polypeptide: Methionine--tRNA ligase (679 aa).

Positions 14–24 (PYANGSIHLGH) match the 'HIGH' region motif. Zn(2+) is bound by residues Cys145, Cys148, Cys158, and Cys161. The short motif at 331 to 335 (KMSKS) is the 'KMSKS' region element. Lys334 lines the ATP pocket. The 103-residue stretch at 577–679 (TFAAVDLRVA…SGAKPGQRIK (103 aa)) folds into the tRNA-binding domain.

The protein belongs to the class-I aminoacyl-tRNA synthetase family. MetG type 1 subfamily. As to quaternary structure, homodimer. Zn(2+) serves as cofactor.

It localises to the cytoplasm. It carries out the reaction tRNA(Met) + L-methionine + ATP = L-methionyl-tRNA(Met) + AMP + diphosphate. Is required not only for elongation of protein synthesis but also for the initiation of all mRNA translation through initiator tRNA(fMet) aminoacylation. In Pseudomonas putida (strain ATCC 700007 / DSM 6899 / JCM 31910 / BCRC 17059 / LMG 24140 / F1), this protein is Methionine--tRNA ligase.